The sequence spans 494 residues: Guanosine-5'-triphosphate,3'-diphosphate pyrophosphatase (494 aa).

It belongs to the GppA/Ppx family. GppA subfamily.

The catalysed reaction is guanosine 3'-diphosphate 5'-triphosphate + H2O = guanosine 3',5'-bis(diphosphate) + phosphate + H(+). It functions in the pathway purine metabolism; ppGpp biosynthesis; ppGpp from GTP: step 2/2. Functionally, catalyzes the conversion of pppGpp to ppGpp. Guanosine pentaphosphate (pppGpp) is a cytoplasmic signaling molecule which together with ppGpp controls the 'stringent response', an adaptive process that allows bacteria to respond to amino acid starvation, resulting in the coordinated regulation of numerous cellular activities. The sequence is that of Guanosine-5'-triphosphate,3'-diphosphate pyrophosphatase from Escherichia fergusonii (strain ATCC 35469 / DSM 13698 / CCUG 18766 / IAM 14443 / JCM 21226 / LMG 7866 / NBRC 102419 / NCTC 12128 / CDC 0568-73).